Here is a 62-residue protein sequence, read N- to C-terminus: TKSTTTACCDFCPCTRSIPPQCQCTDVREKCHSACKSCLCTRSFPPQCRCYDITDFCYPSCS.

Intrachain disulfides connect Cys-8/Cys-61, Cys-9/Cys-24, Cys-12/Cys-57, Cys-14/Cys-22, Cys-31/Cys-38, Cys-35/Cys-50, and Cys-40/Cys-48.

As to quaternary structure, forms a monomer at protein concentrations of below 1 mM. At concentrations of above 2 mM, self-associates.

Functionally, inhibits trypsin but not chymotrypsin. Inhibits the trypsin-like proteinase activity present in larvae of the crop pests Adoxophyes orana, Hyphantria cunea, Lobesia botrana and Ostrinia nubilalis. The chain is Bowman-Birk type proteinase inhibitor from Medicago scutellata (Snail medic).